The following is a 447-amino-acid chain: Tubulin beta-2 chain (447 aa).

GTP-binding residues include glutamine 11, glutamate 69, serine 138, glycine 142, threonine 143, glycine 144, asparagine 204, and asparagine 226. Glutamate 69 serves as a coordination point for Mg(2+). The disordered stretch occupies residues 426–447; sequence QDAGVDEEEEEYEDDAPLEEEV. A compositionally biased stretch (acidic residues) spans 429–447; it reads GVDEEEEEYEDDAPLEEEV.

This sequence belongs to the tubulin family. In terms of assembly, dimer of alpha and beta chains. A typical microtubule is a hollow water-filled tube with an outer diameter of 25 nm and an inner diameter of 15 nM. Alpha-beta heterodimers associate head-to-tail to form protofilaments running lengthwise along the microtubule wall with the beta-tubulin subunit facing the microtubule plus end conferring a structural polarity. Microtubules usually have 13 protofilaments but different protofilament numbers can be found in some organisms and specialized cells. The cofactor is Mg(2+).

The protein resides in the cytoplasm. The protein localises to the cytoskeleton. Functionally, tubulin is the major constituent of microtubules, a cylinder consisting of laterally associated linear protofilaments composed of alpha- and beta-tubulin heterodimers. Microtubules grow by the addition of GTP-tubulin dimers to the microtubule end, where a stabilizing cap forms. Below the cap, tubulin dimers are in GDP-bound state, owing to GTPase activity of alpha-tubulin. In Colletotrichum graminicola (Maize anthracnose fungus), this protein is Tubulin beta-2 chain (TUB2).